The following is a 164-amino-acid chain: Flavodoxin (164 aa).

One can recognise a Flavodoxin-like domain in the interval 4–160 (IGIFFGTDSG…RISKWVEQVK (157 aa)).

The protein belongs to the flavodoxin family. FMN serves as cofactor.

In terms of biological role, low-potential electron donor to a number of redox enzymes. In Helicobacter pylori (strain ATCC 700392 / 26695) (Campylobacter pylori), this protein is Flavodoxin (fldA).